The sequence spans 233 residues: Choline-phosphate cytidylyltransferase (233 aa).

Positions 6, 8, 9, 80, 85, and 101 each coordinate CDP-choline. Aspartate 102 contributes to the Mg(2+) binding site. Tyrosine 187 contributes to the CDP-choline binding site. Residues glutamate 213 and aspartate 215 each coordinate Mg(2+).

The protein belongs to the LicC/PntC cytidylyltransferase family. Mg(2+) serves as cofactor.

It carries out the reaction phosphocholine + CTP + H(+) = CDP-choline + diphosphate. It participates in lipopolysaccharide biosynthesis. Functionally, cytidylyltransferase involved in the biosynthesis of lipopolysaccharides (LPS), a necessary component and antigenic determinant of the outer membrane that has been shown to be an important factor in the host-parasite interaction in a number of Gram-negative species. Catalyzes the activation of phosphocholine (P-Cho) to CDP-choline (CDP-Cho). LicC is critical for the expression of the 6A2-specific epitope. This Haemophilus influenzae (strain ATCC 51907 / DSM 11121 / KW20 / Rd) protein is Choline-phosphate cytidylyltransferase.